A 239-amino-acid chain; its full sequence is Ribose-5-phosphate isomerase A (239 aa).

Substrate contacts are provided by residues 40 to 43 (SGST), 96 to 99 (DGAD), and 110 to 113 (KGGG). Residue glutamate 119 is the Proton acceptor of the active site. Lysine 137 contacts substrate.

This sequence belongs to the ribose 5-phosphate isomerase family. Homodimer.

The enzyme catalyses aldehydo-D-ribose 5-phosphate = D-ribulose 5-phosphate. It functions in the pathway carbohydrate degradation; pentose phosphate pathway; D-ribose 5-phosphate from D-ribulose 5-phosphate (non-oxidative stage): step 1/1. Functionally, catalyzes the reversible conversion of ribose-5-phosphate to ribulose 5-phosphate. This chain is Ribose-5-phosphate isomerase A, found in Methanococcus maripaludis (strain C7 / ATCC BAA-1331).